Reading from the N-terminus, the 148-residue chain is Large ribosomal subunit protein bL9 (148 aa).

It belongs to the bacterial ribosomal protein bL9 family.

Its function is as follows. Binds to the 23S rRNA. This Sulfurimonas denitrificans (strain ATCC 33889 / DSM 1251) (Thiomicrospira denitrificans (strain ATCC 33889 / DSM 1251)) protein is Large ribosomal subunit protein bL9.